A 309-amino-acid polypeptide reads, in one-letter code: MKRKIIVGSRRSKLALTQSNWVINKLKENYPEFDFEIKEIVTKGDRILDVTLSKVGGKGLFVSEVEQALSDEVIDFAVHSMKDVPSSLKEGLIIGAIPKRESPLDCFVFNRVNSLDELPQGSVIGTSSLRRAAQLLKHRPDFVIKPIRGNIDTRLQKLHAENFDAIILAKAGLARMGWLENTTLKLEDIPPELCLPAVGQGALAIECRESDQQIRDMLTSIHHEETGICVEAERVFLKKLNGGCEIPIAGFATRANEVVHFKGLVGNADGSIILASEQAGANPSEIGNKVAEDLLSEGADTIIKELRNI.

Position 244 is an S-(dipyrrolylmethanemethyl)cysteine (cysteine 244).

This sequence belongs to the HMBS family. As to quaternary structure, monomer. The cofactor is dipyrromethane.

It catalyses the reaction 4 porphobilinogen + H2O = hydroxymethylbilane + 4 NH4(+). The protein operates within porphyrin-containing compound metabolism; protoporphyrin-IX biosynthesis; coproporphyrinogen-III from 5-aminolevulinate: step 2/4. Functionally, tetrapolymerization of the monopyrrole PBG into the hydroxymethylbilane pre-uroporphyrinogen in several discrete steps. This chain is Porphobilinogen deaminase, found in Listeria monocytogenes serotype 4b (strain CLIP80459).